A 229-amino-acid polypeptide reads, in one-letter code: Ribosome maturation factor RimM (229 aa).

The segment at 1-37 is disordered; it reads MAGHDSGNAKRGRSPSFGVFVRKPVERTSAKGTSDGA. A PRC barrel domain is found at 148–229; sequence ADEFYWVDLI…RVVVDWEADY (82 aa).

It belongs to the RimM family. As to quaternary structure, binds ribosomal protein uS19.

The protein localises to the cytoplasm. In terms of biological role, an accessory protein needed during the final step in the assembly of 30S ribosomal subunit, possibly for assembly of the head region. Essential for efficient processing of 16S rRNA. May be needed both before and after RbfA during the maturation of 16S rRNA. It has affinity for free ribosomal 30S subunits but not for 70S ribosomes. This chain is Ribosome maturation factor RimM, found in Burkholderia pseudomallei (strain 668).